The sequence spans 457 residues: UDP-N-acetyl-alpha-D-muramoyl-L-alanyl-L-glutamate epimerase (457 aa).

It belongs to the MurL family.

The enzyme catalyses UDP-N-acetyl-alpha-D-muramoyl-L-alanyl-L-glutamate + ATP + H2O = UDP-N-acetyl-alpha-D-muramoyl-L-alanyl-D-glutamate + AMP + diphosphate + H(+). It functions in the pathway cell wall biogenesis; peptidoglycan biosynthesis. Functionally, cell wall formation. Catalyzes epimerization of the terminal L-glutamate in UDP-N-acetyl-alpha-D-muramoyl-L-alanyl-L-glutamate. This Salinispora tropica (strain ATCC BAA-916 / DSM 44818 / JCM 13857 / NBRC 105044 / CNB-440) protein is UDP-N-acetyl-alpha-D-muramoyl-L-alanyl-L-glutamate epimerase.